Here is an 86-residue protein sequence, read N- to C-terminus: Small ribosomal subunit protein bS20 (86 aa).

Residues 1–22 (MANIASARKRARQAEKNRQHNM) are disordered.

The protein belongs to the bacterial ribosomal protein bS20 family.

Functionally, binds directly to 16S ribosomal RNA. In Thioalkalivibrio sulfidiphilus (strain HL-EbGR7), this protein is Small ribosomal subunit protein bS20.